The chain runs to 268 residues: Endonuclease 8 1 (268 aa).

The active-site Schiff-base intermediate with DNA is the P2. Residue E3 is the Proton donor of the active site. K52 acts as the Proton donor; for beta-elimination activity in catalysis. DNA is bound by residues R125 and N166. An FPG-type zinc finger spans residues 234–268 (YVYRRAGEPCRVCGGVIRTALLEGRNVFWCPVCQT). The active-site Proton donor; for delta-elimination activity is R258.

It belongs to the FPG family. The cofactor is Zn(2+).

It catalyses the reaction 2'-deoxyribonucleotide-(2'-deoxyribose 5'-phosphate)-2'-deoxyribonucleotide-DNA = a 3'-end 2'-deoxyribonucleotide-(2,3-dehydro-2,3-deoxyribose 5'-phosphate)-DNA + a 5'-end 5'-phospho-2'-deoxyribonucleoside-DNA + H(+). Involved in base excision repair of DNA damaged by oxidation or by mutagenic agents. Acts as a DNA glycosylase that recognizes and removes damaged bases. Has AP (apurinic/apyrimidinic) lyase activity and introduces nicks in the DNA strand. Cleaves the DNA backbone by beta-delta elimination to generate a single-strand break at the site of the removed base with both 3'- and 5'-phosphates. This is Endonuclease 8 1 (nei1) from Mycobacterium bovis (strain ATCC BAA-935 / AF2122/97).